Reading from the N-terminus, the 503-residue chain is D-xylose-proton symporter-like 2 (503 aa).

The segment covering 1-15 (MALDPEQQQPISSVS) has biased composition (polar residues). The segment at 1–32 (MALDPEQQQPISSVSREFGKSSGEISPEREPL) is disordered. Alanine 2 carries the N-acetylalanine modification. Phosphoserine is present on serine 26. Transmembrane regions (helical) follow at residues 42–62 (YSVV…LLYG), 99–119 (GSLY…DVIG), 124–144 (LILA…APTY), 146–166 (VLII…HAAP), 187–207 (FFIV…VNVH), 213–233 (MYAT…WLPA), 305–325 (ALII…PSVL), 346–366 (VSIL…VVID), 375–395 (LGGV…YLFF), 400–420 (VVAV…FGPI), 437–457 (GLSL…FAFS), and 467–487 (ILFC…FFIV).

It belongs to the major facilitator superfamily. Sugar transporter (TC 2.A.1.1) family.

The protein resides in the membrane. The protein is D-xylose-proton symporter-like 2 of Arabidopsis thaliana (Mouse-ear cress).